The chain runs to 1191 residues: DNA topoisomerase 2 (1191 aa).

ATP is bound by residues N64, N95, and G142 to K149. Residues E437, D538, and D540 each contribute to the Mg(2+) site. One can recognise a Topo IIA-type catalytic domain in the interval I706–I1173. The active-site O-(5'-phospho-DNA)-tyrosine intermediate is the Y799.

This sequence belongs to the type II topoisomerase family. Mg(2+) is required as a cofactor. The cofactor is Mn(2+). It depends on Ca(2+) as a cofactor.

It is found in the host cytoplasm. The enzyme catalyses ATP-dependent breakage, passage and rejoining of double-stranded DNA.. In terms of biological role, type II topoisomerase. Processively relaxes supercoiled DNA. Displays DNA-supercoiling activity only when associated with the viral histone-like protein. The protein is DNA topoisomerase 2 of Ornithodoros (relapsing fever ticks).